A 292-amino-acid polypeptide reads, in one-letter code: Siderophore triacetylfusarinine C esterase (292 aa).

Triacetylfusarinine C-binding residues include Arg-97, Ser-148, Tyr-149, Ser-174, Trp-176, and His-267.

This sequence belongs to the esterase D family.

Its subcellular location is the cytoplasm. It catalyses the reaction triacetylfusarinine C + 3 H2O = 3 N-acetylfusarinine + Fe(3+). Its function is as follows. Displays specific triacetylfusarinine C (TAFC) esterase activity but does not hydrolyze fusarinine C, which has the same core structure as TAFC. Hydrolysis optimizes but is not essential for TAFC-mediated iron uptake. Both extra- and intracellular siderophores have been shown to be crucial for the virulence. Subsequent to chelation of iron and uptake, FsC and TAFC are hydrolyzed and the iron is transferred to the metabolism or to the intracellular siderophore ferricrocin (FC) for transport and storage of iron. Hydrolyzes both TAFC and DF-TAFC with equal efficiencies, suggesting that its function might not be restricted to the release of iron from the siderophore but might also include the degradation of the iron-free chelator to protect cells. The protein is Siderophore triacetylfusarinine C esterase of Aspergillus fumigatus (strain ATCC MYA-4609 / CBS 101355 / FGSC A1100 / Af293) (Neosartorya fumigata).